Reading from the N-terminus, the 500-residue chain is Lariat debranching enzyme (500 aa).

The interval 1-25 is disordered; it reads MSSKNPVDEQPCCGSHEGSHQDPAP. Residues Cys-48, His-50, Asp-79, and Asn-124 each contribute to the a divalent metal cation site. Residues 164-194 form a lariat recognition loop region; sequence SGIFSQGDFQFSHYERPSFSERDVKSAYHVR. His-222, His-274, and His-276 together coordinate a divalent metal cation. Positions 453–500 are disordered; that stretch reads DDANAKPNQDDVDFGDEDFVIDRGHTSDEPEAKKSRLDEDKFEAVPSE. Over residues 462-471 the composition is skewed to acidic residues; that stretch reads DDVDFGDEDF. Positions 472–500 are enriched in basic and acidic residues; that stretch reads VIDRGHTSDEPEAKKSRLDEDKFEAVPSE.

The protein belongs to the lariat debranching enzyme family. Fe(2+) is required as a cofactor. The cofactor is Zn(2+). Mn(2+) serves as cofactor.

Its subcellular location is the nucleus. Its activity is regulated as follows. Active in presence of diverse metals including Fe(2+), Zn(2+), Mn(2+). Binds two metal cations in two adjacent alpha and beta metal-binding pockets. Functionally, cleaves the 2'-5' phosphodiester linkage at the branch point of lariat intron pre-mRNAs after splicing and converts them into linear molecules that are subsequently degraded. It thereby facilitates ribonucleotide turnover. This chain is Lariat debranching enzyme, found in Caenorhabditis elegans.